The following is a 458-amino-acid chain: UDP-N-acetylmuramoylalanine--D-glutamate ligase (458 aa).

ATP is bound at residue 124–130; it reads GSDGKTT.

The protein belongs to the MurCDEF family.

The protein localises to the cytoplasm. The catalysed reaction is UDP-N-acetyl-alpha-D-muramoyl-L-alanine + D-glutamate + ATP = UDP-N-acetyl-alpha-D-muramoyl-L-alanyl-D-glutamate + ADP + phosphate + H(+). It functions in the pathway cell wall biogenesis; peptidoglycan biosynthesis. Its function is as follows. Cell wall formation. Catalyzes the addition of glutamate to the nucleotide precursor UDP-N-acetylmuramoyl-L-alanine (UMA). In Clostridium botulinum (strain Okra / Type B1), this protein is UDP-N-acetylmuramoylalanine--D-glutamate ligase.